We begin with the raw amino-acid sequence, 388 residues long: Succinyl-diaminopimelate desuccinylase (388 aa).

Zn(2+) is bound at residue His84. The active site involves Asp86. Zn(2+) is bound at residue Asp115. The active-site Proton acceptor is Glu146. Zn(2+) is bound by residues Glu147, Glu175, and His360.

Belongs to the peptidase M20A family. DapE subfamily. In terms of assembly, homodimer. It depends on Zn(2+) as a cofactor. Co(2+) serves as cofactor.

It catalyses the reaction N-succinyl-(2S,6S)-2,6-diaminopimelate + H2O = (2S,6S)-2,6-diaminopimelate + succinate. It participates in amino-acid biosynthesis; L-lysine biosynthesis via DAP pathway; LL-2,6-diaminopimelate from (S)-tetrahydrodipicolinate (succinylase route): step 3/3. Catalyzes the hydrolysis of N-succinyl-L,L-diaminopimelic acid (SDAP), forming succinate and LL-2,6-diaminopimelate (DAP), an intermediate involved in the bacterial biosynthesis of lysine and meso-diaminopimelic acid, an essential component of bacterial cell walls. The polypeptide is Succinyl-diaminopimelate desuccinylase (Helicobacter pylori (strain G27)).